Consider the following 163-residue polypeptide: Nucleotide-binding protein Spro_1084 (163 aa).

It belongs to the YajQ family.

Its function is as follows. Nucleotide-binding protein. This Serratia proteamaculans (strain 568) protein is Nucleotide-binding protein Spro_1084.